The chain runs to 188 residues: Ribosome maturation factor RimP (188 aa).

This sequence belongs to the RimP family.

The protein localises to the cytoplasm. Functionally, required for maturation of 30S ribosomal subunits. The polypeptide is Ribosome maturation factor RimP (Corynebacterium aurimucosum (strain ATCC 700975 / DSM 44827 / CIP 107346 / CN-1) (Corynebacterium nigricans)).